The sequence spans 108 residues: Ig kappa chain V-V region NQ5-89.4 (108 aa).

Residues 1–23 (DIQMTQTTSSLSASLGHRVTITC) form a framework-1 region. The cysteines at positions 23 and 88 are disulfide-linked. Residues 24–34 (SASQDISNYLN) form a complementarity-determining-1 region. The tract at residues 35–49 (WYQQKPDGTVKLLIY) is framework-2. Residues 50-56 (YTSRLHS) are complementarity-determining-2. Residues 57 to 88 (GVPSRFSGSGSATDYSLTITNLQQEDXATYXC) are framework-3. A complementarity-determining-3 region spans residues 89–97 (QQGNTLPYT). The segment at 98 to 107 (FGGGTKLXIK) is framework-4.

Functionally, anti-2-phenyl oxazolone (PHOX) Antibody. This Mus musculus (Mouse) protein is Ig kappa chain V-V region NQ5-89.4.